We begin with the raw amino-acid sequence, 700 residues long: Chondroitinase-AC (700 aa).

The signal sequence occupies residues 1–22 (MKKLFVTCIVFFSILSPALLIA). Residues His225, Tyr234, and Arg288 contribute to the active site. Ser328 is a glycosylation site (O-linked (Man...) serine). The Ca(2+) site is built by Glu405, Asp407, Asp416, and Tyr417. Residue Ser455 is glycosylated (O-linked (Man...) serine).

The protein belongs to the polysaccharide lyase 8 family. In terms of assembly, monomer. Requires Ca(2+) as cofactor.

It catalyses the reaction Eliminative degradation of polysaccharides containing 1,4-beta-D-hexosaminyl and 1,3-beta-D-glucuronosyl linkages to disaccharides containing 4-deoxy-beta-D-gluc-4-enuronosyl groups.. In Pedobacter heparinus (strain ATCC 13125 / DSM 2366 / CIP 104194 / JCM 7457 / NBRC 12017 / NCIMB 9290 / NRRL B-14731 / HIM 762-3), this protein is Chondroitinase-AC (cslA).